The chain runs to 255 residues: uncharacterized protein (255 aa).

Belongs to the methyltransferase superfamily.

This is an uncharacterized protein from Mycolicibacterium paratuberculosis (strain ATCC BAA-968 / K-10) (Mycobacterium paratuberculosis).